Reading from the N-terminus, the 257-residue chain is tRNA-cytidine(32) 2-sulfurtransferase (257 aa).

Positions 37–42 (SGGKDS) match the PP-loop motif motif. Residues Cys-112, Cys-115, and Cys-202 each coordinate [4Fe-4S] cluster.

Belongs to the TtcA family. As to quaternary structure, homodimer. Requires Mg(2+) as cofactor. [4Fe-4S] cluster serves as cofactor.

It is found in the cytoplasm. The enzyme catalyses cytidine(32) in tRNA + S-sulfanyl-L-cysteinyl-[cysteine desulfurase] + AH2 + ATP = 2-thiocytidine(32) in tRNA + L-cysteinyl-[cysteine desulfurase] + A + AMP + diphosphate + H(+). The protein operates within tRNA modification. Its function is as follows. Catalyzes the ATP-dependent 2-thiolation of cytidine in position 32 of tRNA, to form 2-thiocytidine (s(2)C32). The sulfur atoms are provided by the cysteine/cysteine desulfurase (IscS) system. The sequence is that of tRNA-cytidine(32) 2-sulfurtransferase from Geobacter sulfurreducens (strain ATCC 51573 / DSM 12127 / PCA).